We begin with the raw amino-acid sequence, 272 residues long: SWIRM domain-containing protein laf2 (272 aa).

The tract at residues 86 to 148 is disordered; the sequence is HVGRWANRHS…RRRKSARGNG (63 aa). Low complexity-rich tracts occupy residues 95-120 and 127-136; these read SNVS…SYSG and RSISSSPSTI. Residues Ser-130 and Ser-132 each carry the phosphoserine modification. Thr-135 is subject to Phosphothreonine. The SWIRM domain maps to 182–272; sequence LKAEWKGPPL…AFHEVGFFDD (91 aa).

Component of the RPD3C(L) complex.

It is found in the nucleus. Component of the RPD3C(L) histone deacetylase complex (HDAC) responsible for the deacetylation of lysine residues on the N-terminal part of the core histones (H2A, H2B, H3 and H4). Histone deacetylation gives a tag for epigenetic repression and plays an important role in transcriptional regulation, cell cycle progression and developmental events. The protein is SWIRM domain-containing protein laf2 (laf2) of Schizosaccharomyces pombe (strain 972 / ATCC 24843) (Fission yeast).